The sequence spans 228 residues: ATP phosphoribosyltransferase (228 aa).

The protein belongs to the ATP phosphoribosyltransferase family. Short subfamily. In terms of assembly, heteromultimer composed of HisG and HisZ subunits.

It localises to the cytoplasm. The enzyme catalyses 1-(5-phospho-beta-D-ribosyl)-ATP + diphosphate = 5-phospho-alpha-D-ribose 1-diphosphate + ATP. Its pathway is amino-acid biosynthesis; L-histidine biosynthesis; L-histidine from 5-phospho-alpha-D-ribose 1-diphosphate: step 1/9. In terms of biological role, catalyzes the condensation of ATP and 5-phosphoribose 1-diphosphate to form N'-(5'-phosphoribosyl)-ATP (PR-ATP). Has a crucial role in the pathway because the rate of histidine biosynthesis seems to be controlled primarily by regulation of HisG enzymatic activity. The polypeptide is ATP phosphoribosyltransferase (Moorella thermoacetica (strain ATCC 39073 / JCM 9320)).